We begin with the raw amino-acid sequence, 143 residues long: Large ribosomal subunit protein uL16 (143 aa).

Positions 1–17 are enriched in basic residues; sequence MLQPKRTKFRKAHKGRI. The segment at 1–20 is disordered; it reads MLQPKRTKFRKAHKGRIHGN.

This sequence belongs to the universal ribosomal protein uL16 family. In terms of assembly, part of the 50S ribosomal subunit.

Its function is as follows. Binds 23S rRNA and is also seen to make contacts with the A and possibly P site tRNAs. The chain is Large ribosomal subunit protein uL16 from Zymomonas mobilis subsp. mobilis (strain ATCC 31821 / ZM4 / CP4).